A 165-amino-acid chain; its full sequence is 3-isopropylmalate dehydratase small subunit (165 aa).

Belongs to the LeuD family. LeuD type 2 subfamily. In terms of assembly, heterodimer of LeuC and LeuD.

The enzyme catalyses (2R,3S)-3-isopropylmalate = (2S)-2-isopropylmalate. It functions in the pathway amino-acid biosynthesis; L-leucine biosynthesis; L-leucine from 3-methyl-2-oxobutanoate: step 2/4. Functionally, catalyzes the isomerization between 2-isopropylmalate and 3-isopropylmalate, via the formation of 2-isopropylmaleate. This Lachnoclostridium phytofermentans (strain ATCC 700394 / DSM 18823 / ISDg) (Clostridium phytofermentans) protein is 3-isopropylmalate dehydratase small subunit.